Here is a 218-residue protein sequence, read N- to C-terminus: Glutathione S-transferase class-mu 26 kDa isozyme 7 (218 aa).

The 82-residue stretch at 2 to 83 (PAKLGYWKIR…YIADKHGMLG (82 aa)) folds into the GST N-terminal domain. Residues 7–8 (YW), 41–45 (WLGDK), 54–55 (NL), and 67–68 (QS) each bind glutathione. A GST C-terminal domain is found at 85 to 203 (TPEERARISM…KSERFIKWPL (119 aa)). Tyrosine 111 serves as a coordination point for substrate.

This sequence belongs to the GST superfamily. Mu family. As to quaternary structure, homodimer.

The catalysed reaction is RX + glutathione = an S-substituted glutathione + a halide anion + H(+). Its function is as follows. Conjugation of reduced glutathione to a wide number of exogenous and endogenous hydrophobic electrophiles. In terms of biological role, GST isoenzymes appear to play a central role in the parasite detoxification system. Other functions are also suspected including a role in increasing the solubility of haematin in the parasite gut. This Fasciola hepatica (Liver fluke) protein is Glutathione S-transferase class-mu 26 kDa isozyme 7.